Here is a 129-residue protein sequence, read N- to C-terminus: Follitropin subunit beta (129 aa).

The first 18 residues, 1-18, serve as a signal peptide directing secretion; sequence MKSVQLCLLLWCWRAICC. Cystine bridges form between C21–C69, C35–C84, C38–C122, C46–C100, C50–C102, and C105–C112. N25 and N42 each carry an N-linked (GlcNAc...) asparagine glycan.

Belongs to the glycoprotein hormones subunit beta family. Heterodimer. The active follitropin is a heterodimer composed of an alpha chain/CGA shared with other hormones and a unique beta chain/FSHB shown here.

The protein resides in the secreted. Functionally, together with the alpha chain CGA constitutes follitropin, the follicle-stimulating hormone, and provides its biological specificity to the hormone heterodimer. Binds FSHR, a G protein-coupled receptor, on target cells to activate downstream signaling pathways. Follitropin is involved in follicle development and spermatogenesis in reproductive organs. The chain is Follitropin subunit beta (FSHB) from Meriones unguiculatus (Mongolian jird).